Here is a 341-residue protein sequence, read N- to C-terminus: Methionine import ATP-binding protein MetN 1 (341 aa).

The 240-residue stretch at 2-241 (IEFRQVSKSF…PKTTIAQNFV (240 aa)) folds into the ABC transporter domain. 38 to 45 (GYSGAGKS) is an ATP binding site.

It belongs to the ABC transporter superfamily. Methionine importer (TC 3.A.1.24) family. As to quaternary structure, the complex is composed of two ATP-binding proteins (MetN), two transmembrane proteins (MetI) and a solute-binding protein (MetQ).

The protein localises to the cell membrane. The catalysed reaction is L-methionine(out) + ATP + H2O = L-methionine(in) + ADP + phosphate + H(+). It catalyses the reaction D-methionine(out) + ATP + H2O = D-methionine(in) + ADP + phosphate + H(+). Functionally, part of the ABC transporter complex MetNIQ involved in methionine import. Responsible for energy coupling to the transport system. The sequence is that of Methionine import ATP-binding protein MetN 1 from Staphylococcus aureus (strain MRSA252).